The following is a 183-amino-acid chain: NEDD8-conjugating enzyme Ubc12 (183 aa).

An N-acetylmethionine modification is found at Met-1. The interval 1–28 is disordered; sequence MIKLFSLKQQKKEEESAGGTKGSSKKAS. The UBC core domain occupies 29–173; sequence AAQLRIQKDI…VQRSMRGGYI (145 aa). Residue Cys-111 is the Glycyl thioester intermediate of the active site.

Belongs to the ubiquitin-conjugating enzyme family. UBC12 subfamily. The acetylation of Met-1 increases affinity for DCUN1D1 by about 2 orders of magnitude and is crucial for NEDD8 transfer to cullins.

It carries out the reaction [E1 NEDD8-activating enzyme]-S-[NEDD8 protein]-yl-L-cysteine + [E2 NEDD8-conjugating enzyme]-L-cysteine = [E1 NEDD8-activating enzyme]-L-cysteine + [E2 NEDD8-conjugating enzyme]-S-[NEDD8-protein]-yl-L-cysteine.. Its pathway is protein modification; protein neddylation. Accepts the ubiquitin-like protein NEDD8 from the UBA3-NAE1 E1 complex and catalyzes its covalent attachment to other proteins. The specific interaction with the E3 ubiquitin ligase rbx1, but not rbx2, suggests that the rbx1-ube2m complex neddylates specific target proteins, such as cul1, cul2, cul3 and cul4. Involved in cell proliferation. This Xenopus tropicalis (Western clawed frog) protein is NEDD8-conjugating enzyme Ubc12 (ube2m).